The chain runs to 248 residues: MAAGMYLEHYLDSIENLPFELQRNFQLMRDLDQRTEDLKAEIDKLASEYMSSARSRSSEEKLALLRQIQEAYGKCKEFGDDKVQLAMQTYEMVDKHIRRLDTDLARFEADLKEKQIESSDYDSSSSKGKKSRTQKEKKAARARSKGKNSDEEAPKAAQKKLKLVRTSPEYGMPSVTFGSVHPSDVLDMPVDPNEPTYCLCHQVSYGEMIGCDNPDCSIERFHFACVGLTTKPRGKWFCPRCSQERKKK.

Residues 25–118 are a coiled coil; the sequence is FQLMRDLDQR…ADLKEKQIES (94 aa). Residues Lys112, Lys127, and Lys129 each carry the N6-acetyllysine modification. A disordered region spans residues 115–160; sequence QIESSDYDSSSSKGKKSRTQKEKKAARARSKGKNSDEEAPKAAQKK. The short motif at 127–147 is the Bipartite nuclear localization signal element; sequence KGKKSRTQKEKKAARARSKGK. Residue Arg132 is modified to Citrulline. An N6-acetyllysine mark is found at Lys145, Lys147, and Lys155. Citrulline is present on Arg165. Residues 195-244 form a PHD-type zinc finger; that stretch reads PTYCLCHQVSYGEMIGCDNPDCSIERFHFACVGLTTKPRGKWFCPRCSQE. Cys198, Cys200, Cys211, Cys216, His222, Cys225, Cys238, and Cys241 together coordinate Zn(2+).

It belongs to the ING family. As to quaternary structure, homodimer. Component of the HBO1 complex composed of KAT7/HBO1, MEAF6, ING4 or ING5, and one scaffold subunit: complexes containing BRPF scaffold (BRPF1, BRD1/BRPF2 or BRPF3) direct KAT7/HBO1 specificity towards H3K14ac, while complexes containing JADE scaffold (JADE1, JADE2 and JADE3) mediate acetylation of histone H4. Interacts with H3K4me3 and to a lesser extent with H3K4me2, the interaction augments KAT7/HBO1 acetylation activity on H3 tails. Interacts with EP300, RELA and TP53; these interactions may be indirect. Interacts with EGLN1. Interacts with BCL2A1. Citrullination by PADI4 within the nuclear localization signal disrupts the interaction with p53 and increases susceptibility to degradation.

It is found in the nucleus. Functionally, component of HBO1 complexes, which specifically mediate acetylation of histone H3 at 'Lys-14' (H3K14ac), and have reduced activity toward histone H4. Through chromatin acetylation it may function in DNA replication. May inhibit tumor progression by modulating the transcriptional output of signaling pathways which regulate cell proliferation. Can suppress brain tumor angiogenesis through transcriptional repression of RELA/NFKB3 target genes when complexed with RELA. May also specifically suppress loss of contact inhibition elicited by activated oncogenes such as MYC. Represses hypoxia inducible factor's (HIF) activity by interacting with HIF prolyl hydroxylase 2 (EGLN1). Can enhance apoptosis induced by serum starvation in mammary epithelial cell line HC11. This is Inhibitor of growth protein 4 (ING4) from Bos taurus (Bovine).